A 55-amino-acid polypeptide reads, in one-letter code: Large ribosomal subunit protein bL32 (55 aa).

It belongs to the bacterial ribosomal protein bL32 family.

The sequence is that of Large ribosomal subunit protein bL32 from Aeromonas hydrophila subsp. hydrophila (strain ATCC 7966 / DSM 30187 / BCRC 13018 / CCUG 14551 / JCM 1027 / KCTC 2358 / NCIMB 9240 / NCTC 8049).